The chain runs to 611 residues: Growth hormone receptor (611 aa).

The N-terminal stretch at 1–20 (MDLRHLLLTLVLVCANDSLS) is a signal peptide. The N-linked (GlcNAc...) asparagine glycan is linked to N16. Residues 21–240 (ASDDVLRLPQ…EFVHCAEEIE (220 aa)) are Extracellular-facing. The cysteines at positions 34 and 44 are disulfide-linked. Residue N53 is glycosylated (N-linked (GlcNAc...) asparagine). Residues C75 and C86 are joined by a disulfide bond. N89 carries an N-linked (GlcNAc...) asparagine glycan. C100 and C114 are oxidised to a cystine. The Fibronectin type-III domain maps to 125–228 (PPVHLNWTLL…EILYVSFSQA (104 aa)). N130, N135, and N174 each carry an N-linked (GlcNAc...) asparagine glycan. The WSXWS motif motif lies at 214 to 218 (FGEFS). The helical transmembrane segment at 241–264 (FPWFLVVIFGACGLAVTVILILLS) threads the bilayer. Over 265-611 (KQSRLKMLIF…STDQLNKIMP (347 aa)) the chain is Cytoplasmic. Residues 270 to 355 (KMLIFPPVPV…HLKSHSCLGA (86 aa)) are required for JAK2 binding. Residues 273–281 (IFPPVPVPK) carry the Box 1 motif motif. Residues 316 to 325 (DLWVEFIELD) carry the UbE motif motif. Residues 411–455 (SLPSLANTDTQQPRMSTRPENSQPWPPFADSIDAASPSAHNQLSN) are disordered. Residues 414–433 (SLANTDTQQPRMSTRPENSQ) are compositionally biased toward polar residues.

It belongs to the type I cytokine receptor family. Type 1 subfamily. The soluble form (GHBP) is produced by phorbol ester-promoted proteolytic cleavage at the cell surface (shedding) by ADAM17/TACE.

The protein localises to the cell membrane. It is found in the secreted. Receptor for pituitary gland growth hormone (GH1) involved in regulating postnatal body growth. On ligand binding, couples to the JAK2/STAT5 pathway. Functionally, the soluble form (GHBP) acts as a reservoir of growth hormone in plasma and may be a modulator/inhibitor of GH signaling. This Columba livia (Rock dove) protein is Growth hormone receptor (GHR).